The following is a 373-amino-acid chain: Nuclear migration protein JNM1 (373 aa).

Positions 33–53 are disordered; sequence EVKEDGQQEEQEEASSRKDGL. Position 91 is a phosphoserine (Ser91). 3 coiled-coil regions span residues 114 to 139, 200 to 245, and 331 to 367; these read KIEN…LATE, EDRK…EFEN, and WLKA…EDEA.

Component of the dynactin complex composed of at least ARP1, JNM1, NIP100 and ARP10. Dynactin comprises a short rod of ARP1 polymers attached to ARP10 at its pointed-end and probably associated with the capping protein at its barbed-end. The rod structure is implicated in dynein cargo binding. A sidearm formed by NIP100 projects from the ARP1 filament and is implicated in motor binding. Interacts with ARP1.

It localises to the cytoplasm. The protein localises to the cytoskeleton. Component of the dynactin complex which assists cytoplasmic dynein by increasing its processivity and by regulation of its cargo binding. The dynactin complex is required for the spindle translocation late in anaphase and is involved in a cell wall synthesis checkpoint. JNM1 is associated with the rod and links it to the projecting sidearm. Required for proper nuclear migration during the mitotic cell cycle and for astral microtubule development. The chain is Nuclear migration protein JNM1 (JNM1) from Saccharomyces cerevisiae (strain ATCC 204508 / S288c) (Baker's yeast).